A 144-amino-acid polypeptide reads, in one-letter code: Large ribosomal subunit protein uL15 (144 aa).

A disordered region spans residues 1–48 (MRLNTLSPAAGSKSAAKRVGRGIGSGTGKTCGRGHKGQKSRSGGGVRI). Positions 21–31 (RGIGSGTGKTC) are enriched in gly residues.

It belongs to the universal ribosomal protein uL15 family. In terms of assembly, part of the 50S ribosomal subunit.

Its function is as follows. Binds to the 23S rRNA. In Shewanella woodyi (strain ATCC 51908 / MS32), this protein is Large ribosomal subunit protein uL15.